We begin with the raw amino-acid sequence, 434 residues long: UPF0597 protein CLK_1462 (434 aa).

Belongs to the UPF0597 family.

The polypeptide is UPF0597 protein CLK_1462 (Clostridium botulinum (strain Loch Maree / Type A3)).